A 219-amino-acid chain; its full sequence is Ribose-5-phosphate isomerase A (219 aa).

Substrate is bound by residues 28 to 31 (SGST), 81 to 84 (DGAD), and 94 to 97 (KGGG). Glu103 (proton acceptor) is an active-site residue. A substrate-binding site is contributed by Lys121.

This sequence belongs to the ribose 5-phosphate isomerase family. As to quaternary structure, homodimer.

It catalyses the reaction aldehydo-D-ribose 5-phosphate = D-ribulose 5-phosphate. Its pathway is carbohydrate degradation; pentose phosphate pathway; D-ribose 5-phosphate from D-ribulose 5-phosphate (non-oxidative stage): step 1/1. Its function is as follows. Catalyzes the reversible conversion of ribose-5-phosphate to ribulose 5-phosphate. The sequence is that of Ribose-5-phosphate isomerase A from Haemophilus ducreyi (strain 35000HP / ATCC 700724).